The primary structure comprises 378 residues: Carbamoyl phosphate synthase small chain (378 aa).

The interval 1–189 is CPSase; sequence MTKPAILALA…DSHPEIAASE (189 aa). L-glutamine contacts are provided by Ser47, Gly241, and Gly243. One can recognise a Glutamine amidotransferase type-1 domain in the interval 193 to 378; that stretch reads HVVAYDYGVK…RFIDAMAKRR (186 aa). The active-site Nucleophile is the Cys269. The L-glutamine site is built by Leu270, Gln273, Asn311, Gly313, and Phe314. Catalysis depends on residues His353 and Glu355.

This sequence belongs to the CarA family. Composed of two chains; the small (or glutamine) chain promotes the hydrolysis of glutamine to ammonia, which is used by the large (or ammonia) chain to synthesize carbamoyl phosphate. Tetramer of heterodimers (alpha,beta)4.

It catalyses the reaction hydrogencarbonate + L-glutamine + 2 ATP + H2O = carbamoyl phosphate + L-glutamate + 2 ADP + phosphate + 2 H(+). It carries out the reaction L-glutamine + H2O = L-glutamate + NH4(+). The protein operates within amino-acid biosynthesis; L-arginine biosynthesis; carbamoyl phosphate from bicarbonate: step 1/1. It participates in pyrimidine metabolism; UMP biosynthesis via de novo pathway; (S)-dihydroorotate from bicarbonate: step 1/3. Small subunit of the glutamine-dependent carbamoyl phosphate synthetase (CPSase). CPSase catalyzes the formation of carbamoyl phosphate from the ammonia moiety of glutamine, carbonate, and phosphate donated by ATP, constituting the first step of 2 biosynthetic pathways, one leading to arginine and/or urea and the other to pyrimidine nucleotides. The small subunit (glutamine amidotransferase) binds and cleaves glutamine to supply the large subunit with the substrate ammonia. This Pseudomonas syringae pv. tomato (strain ATCC BAA-871 / DC3000) protein is Carbamoyl phosphate synthase small chain.